Consider the following 455-residue polypeptide: Pre-mRNA-processing factor 17 (455 aa).

The disordered stretch occupies residues 1–89 (MGLVDGYDTS…SQASETQKED (89 aa)). Residues 18-35 (DEGKSVHEKKNGNLHEDT) are compositionally biased toward basic and acidic residues. The segment covering 44–63 (IHKRKSHFTKSELKRRRKTR) has biased composition (basic residues). WD repeat units follow at residues 160-200 (GHPE…ECLR), 204-243 (GHNKPIKALRFTEDCQSFLSSSFDRSVKIWDTETGKVKTR), 291-330 (HHLSSILALKYFPDGSKFISSSEDKTVRIWENQINVPIKQ), 334-373 (TAQHSMPFLNVHPSQNYFCAQSMDNRIYSFSLKPKYKRHP), 379-422 (GHSS…NNIK), and 424-454 (PGNKPITQVDWHPQETSKVICSGAAGKIYVC).

In terms of assembly, belongs to the CWC complex (or CEF1-associated complex), a spliceosome sub-complex reminiscent of a late-stage spliceosome composed of the U2, U5 and U6 snRNAs and at least BUD13, BUD31, BRR2, CDC40, CEF1, CLF1, CUS1, CWC2, CWC15, CWC21, CWC22, CWC23, CWC24, CWC25, CWC27, ECM2, HSH155, IST3, ISY1, LEA1, MSL1, NTC20, PRP8, PRP9, PRP11, PRP19, PRP21, PRP22, PRP45, PRP46, SLU7, SMB1, SMD1, SMD2, SMD3, SMX2, SMX3, SNT309, SNU114, SPP2, SYF1, SYF2, RSE1 and YJU2.

The protein resides in the nucleus. Its function is as follows. May function in the second step of pre-mRNA splicing. Regulatory protein involved in replication and mitotic spindle formation and/or maintenance. Required for initiation and completion of S-phase and for initiation and completion of DNA replication. Might be required for the maintenance of microtubules. Essential only at elevated temperatures. In Saccharomyces cerevisiae (strain ATCC 204508 / S288c) (Baker's yeast), this protein is Pre-mRNA-processing factor 17 (CDC40).